The following is a 529-amino-acid chain: MQQRRPVRRALLSVSDKAGIIEFAQALSARGVELLSTGGTARLLAEKGLPVTEVSDYTGFPEMMDGRVKTLHPKVHGGILGRRGQDDAIMEQHHIAPIDMVVVNLYPFAETVAREGCSLEDAVENIDIGGPTMVRSAAKNHKDVAIVVKSSDYDAIIKEMDANEGSLTLDTRFDLAIKAFEHTAAYDSMIANYFGSMVPAYHGESKEAAGRFPRTLNLNFIKKQDMRYGENSHQQAAFYIEENVKEASVATAQQVQGKALSYNNIADTDAALECVKAFNEPACVIVKHANPCGVAVSTSILDAYDRAYKTDPTSAFGGIIAFNRELDAETAQAIISRQFVEVIIAPSATEEALKITAAKQNVRVLTCGQWAQRVPGLDFKRVNGGLLVQDRDLGMVSEAELRVVSKRQPTEQELRDALFCWKVAKFVKSNAIVYAKENMTIGIGAGQMSRVYSAKIAGIKAADEGLEVKGSAMASDAFFPFRDGIDAAAAVGVSCVIQPGGSIRDEEVIAAADEHGIAMIFTDMRHFRH.

Positions 1-148 constitute an MGS-like domain; sequence MQQRRPVRRA…KNHKDVAIVV (148 aa).

Belongs to the PurH family.

It carries out the reaction (6R)-10-formyltetrahydrofolate + 5-amino-1-(5-phospho-beta-D-ribosyl)imidazole-4-carboxamide = 5-formamido-1-(5-phospho-D-ribosyl)imidazole-4-carboxamide + (6S)-5,6,7,8-tetrahydrofolate. It catalyses the reaction IMP + H2O = 5-formamido-1-(5-phospho-D-ribosyl)imidazole-4-carboxamide. It functions in the pathway purine metabolism; IMP biosynthesis via de novo pathway; 5-formamido-1-(5-phospho-D-ribosyl)imidazole-4-carboxamide from 5-amino-1-(5-phospho-D-ribosyl)imidazole-4-carboxamide (10-formyl THF route): step 1/1. It participates in purine metabolism; IMP biosynthesis via de novo pathway; IMP from 5-formamido-1-(5-phospho-D-ribosyl)imidazole-4-carboxamide: step 1/1. The protein is Bifunctional purine biosynthesis protein PurH of Salmonella agona (strain SL483).